We begin with the raw amino-acid sequence, 154 residues long: MINNKVNVSLSKDLRKKYGIRRFPVAKGDIVKIISGSRKGEGGKVVDVDHKTMKVSIEGVTISKADGKQVPFFIDHSNISITKLDLSRNDRYERLREIAARKNLPPPEVPEETSNDTKESDENVTGADKEETNEIKEEDLNDNEDKNNDGSQEA.

The segment at 97 to 154 (EIAARKNLPPPEVPEETSNDTKESDENVTGADKEETNEIKEEDLNDNEDKNNDGSQEA) is disordered. A compositionally biased stretch (basic and acidic residues) spans 115–135 (NDTKESDENVTGADKEETNEI).

Belongs to the universal ribosomal protein uL24 family. Part of the 50S ribosomal subunit.

One of two assembly initiator proteins, it binds directly to the 5'-end of the 23S rRNA, where it nucleates assembly of the 50S subunit. Its function is as follows. Located at the polypeptide exit tunnel on the outside of the subunit. This Picrophilus torridus (strain ATCC 700027 / DSM 9790 / JCM 10055 / NBRC 100828 / KAW 2/3) protein is Large ribosomal subunit protein uL24.